Here is a 405-residue protein sequence, read N- to C-terminus: Replication factor C large subunit (405 aa).

47–54 (GPPGVGKT) contacts ATP.

The protein belongs to the activator 1 small subunits family. RfcL subfamily. Heteromultimer composed of small subunits (RfcS) and large subunits (RfcL).

Part of the RFC clamp loader complex which loads the PCNA sliding clamp onto DNA. In Saccharolobus islandicus (strain L.S.2.15 / Lassen #1) (Sulfolobus islandicus), this protein is Replication factor C large subunit.